Reading from the N-terminus, the 229-residue chain is 5'-methylthioadenosine/S-adenosylhomocysteine nucleosidase (229 aa).

Residue glutamate 12 is the Proton acceptor of the active site. Residues glycine 78, isoleucine 152, and 173 to 174 (ME) contribute to the substrate site. Catalysis depends on aspartate 197, which acts as the Proton donor.

This sequence belongs to the PNP/UDP phosphorylase family. MtnN subfamily.

It carries out the reaction S-adenosyl-L-homocysteine + H2O = S-(5-deoxy-D-ribos-5-yl)-L-homocysteine + adenine. It catalyses the reaction S-methyl-5'-thioadenosine + H2O = 5-(methylsulfanyl)-D-ribose + adenine. The enzyme catalyses 5'-deoxyadenosine + H2O = 5-deoxy-D-ribose + adenine. Its pathway is amino-acid biosynthesis; L-methionine biosynthesis via salvage pathway; S-methyl-5-thio-alpha-D-ribose 1-phosphate from S-methyl-5'-thioadenosine (hydrolase route): step 1/2. Catalyzes the irreversible cleavage of the glycosidic bond in both 5'-methylthioadenosine (MTA) and S-adenosylhomocysteine (SAH/AdoHcy) to adenine and the corresponding thioribose, 5'-methylthioribose and S-ribosylhomocysteine, respectively. Also cleaves 5'-deoxyadenosine, a toxic by-product of radical S-adenosylmethionine (SAM) enzymes, into 5-deoxyribose and adenine. The chain is 5'-methylthioadenosine/S-adenosylhomocysteine nucleosidase from Baumannia cicadellinicola subsp. Homalodisca coagulata.